Reading from the N-terminus, the 120-residue chain is Flagellar protein FliT (120 aa).

The required for homodimerization stretch occupies residues 1–50 (MENLSPLLIEYQGLLKLIRNIKAMALNGLWDDVVEQEIVYIQSIERISQI). The segment at 60–98 (VQLQFRQLLQDILDTESQVKELLQNRMQELAVLIQQSQN) is fliD binding.

It belongs to the FliT family. In terms of assembly, homodimer. Interacts with FliD and FlhC.

It is found in the cytoplasm. The protein resides in the cytosol. Its function is as follows. Dual-function protein that regulates the transcription of class 2 flagellar operons and that also acts as an export chaperone for the filament-capping protein FliD. As a transcriptional regulator, acts as an anti-FlhDC factor; it directly binds FlhC, thus inhibiting the binding of the FlhC/FlhD complex to class 2 promoters, resulting in decreased expression of class 2 flagellar operons. As a chaperone, effects FliD transition to the membrane by preventing its premature polymerization, and by directing it to the export apparatus. The protein is Flagellar protein FliT of Dickeya chrysanthemi (Pectobacterium chrysanthemi).